The following is a 115-amino-acid chain: Promotilin (115 aa).

Residues 1–25 form the signal peptide; it reads MLSRKATAVLLAVHAAAMLASQTEA. Residues 43–72 form a disordered region; that stretch reads RYKGQKKSLSVQQRSEEVGPVDPTEPWEEK.

This sequence belongs to the motilin family.

Its subcellular location is the secreted. Plays an important role in the regulation of interdigestive gastrointestinal motility and indirectly causes rhythmic contraction of duodenal and colonic smooth muscle. This Bos taurus (Bovine) protein is Promotilin (MLN).